The sequence spans 526 residues: MNGSKNGTAVANSTNGLDDNGLMVLESVSIIIIAILACLGNLVIVVTLYKKPYLLTPSNKFVFSLTSSNLLLSVLMLPFVVASSVRRDWMFGVVWCNFTALLHLLVSSSSMLTLGAIAIDRYYAVLYPMIYPMKITGNRAVLAIVYIWLHSLVGCLPPLFGWSSFEFDRFKWTCTVSWHKEISYTAFWVTWCCLLPLVAMLVCYGVIFRVARIKARKVYCGSVVVSQEESSSQNNGRKNSNTSTSSSGSRKSLIYSGSQCKAFITILVVLGTFLTTWGPYVVVISTEALLGKNSVSPQVETLVSWLSFTSAVCHPLIYGLWNKTVRKELLGMCFDDRYYRESFVIRHRTSRLFSISNRITDLGMSPHLTAMLVGGGQLLGRGSSTGDTGFSYTQDSATDVMLLESYTSEASHSAHCTANKRRSSVTFEDQVDHIPQGDPSVVQVTADIHKSLDSFASSLAKAIENDAKLQLLGEWTQIPTSLFTVRNTQRVPRYLDGQRLRMESIDEGIVKDDDDDEEEMEREEKM.

Topologically, residues 1-27 are extracellular; sequence MNGSKNGTAVANSTNGLDDNGLMVLES. N-linked (GlcNAc...) asparagine glycosylation is found at asparagine 2, asparagine 6, and asparagine 12. The helical transmembrane segment at 28–48 threads the bilayer; it reads VSIIIIAILACLGNLVIVVTL. Residues 49–60 lie on the Cytoplasmic side of the membrane; it reads YKKPYLLTPSNK. The helical transmembrane segment at 61–81 threads the bilayer; it reads FVFSLTSSNLLLSVLMLPFVV. The Extracellular segment spans residues 82 to 98; sequence ASSVRRDWMFGVVWCNF. Cysteine 96 and cysteine 174 form a disulfide bridge. Asparagine 97 carries N-linked (GlcNAc...) asparagine glycosylation. The chain crosses the membrane as a helical span at residues 99 to 119; it reads TALLHLLVSSSSMLTLGAIAI. Topologically, residues 120-139 are cytoplasmic; the sequence is DRYYAVLYPMIYPMKITGNR. The chain crosses the membrane as a helical span at residues 140-160; the sequence is AVLAIVYIWLHSLVGCLPPLF. Topologically, residues 161 to 186 are extracellular; sequence GWSSFEFDRFKWTCTVSWHKEISYTA. A helical transmembrane segment spans residues 187–207; sequence FWVTWCCLLPLVAMLVCYGVI. The Cytoplasmic segment spans residues 208 to 263; the sequence is FRVARIKARKVYCGSVVVSQEESSSQNNGRKNSNTSTSSSGSRKSLIYSGSQCKAF. The interval 231-250 is disordered; that stretch reads SSQNNGRKNSNTSTSSSGSR. The helical transmembrane segment at 264–284 threads the bilayer; the sequence is ITILVVLGTFLTTWGPYVVVI. Over 285–300 the chain is Extracellular; sequence STEALLGKNSVSPQVE. Residues 301 to 321 form a helical membrane-spanning segment; sequence TLVSWLSFTSAVCHPLIYGLW. At 322 to 526 the chain is on the cytoplasmic side; the sequence is NKTVRKELLG…EEEMEREEKM (205 aa). The tract at residues 505–526 is disordered; sequence IDEGIVKDDDDDEEEMEREEKM. Over residues 512–526 the composition is skewed to acidic residues; sequence DDDDDEEEMEREEKM.

This sequence belongs to the G-protein coupled receptor 1 family.

The protein resides in the cell projection. The protein localises to the cilium membrane. It is found in the cell membrane. Functionally, key negative regulator of Shh signaling during neural tube development. Recruited to primary cilia and acts as a regulator of the PKA-dependent basal repression machinery in Shh signaling by increasing cAMP levels, leading to promote the PKA-dependent processing of gli3 into gli3r and repress the Shh signaling. In presence of shh, it is removed from primary cilia, preventing its activity and allowing activation of the Shh signaling. Required in left/right patterning by modulating Ca(2+) levels in the cells surrounding the Kupffer vesicle. The polypeptide is G-protein coupled receptor 161 (gpr161) (Danio rerio (Zebrafish)).